A 381-amino-acid polypeptide reads, in one-letter code: Cytochrome b (381 aa).

A run of 4 helical transmembrane segments spans residues 34-54 (FGSL…FLAM), 78-99 (WLIR…YFHI), 114-134 (WNIG…GYVL), and 179-199 (FFAF…IHIL). 2 residues coordinate heme b: His-84 and His-98. The heme b site is built by His-183 and His-197. His-202 lines the a ubiquinone pocket. 4 helical membrane-spanning segments follow: residues 227-247 (YKDA…ALFL), 289-309 (LGGV…PFLH), 321-341 (LTQV…WIGG), and 348-368 (FILI…IAIP).

The protein belongs to the cytochrome b family. As to quaternary structure, the cytochrome bc1 complex contains 3 respiratory subunits (MT-CYB, CYC1 and UQCRFS1), 2 core proteins (UQCRC1 and UQCRC2) and probably 6 low-molecular weight proteins. The cofactor is heme b.

It localises to the mitochondrion inner membrane. Its function is as follows. Component of the ubiquinol-cytochrome c reductase complex (complex III or cytochrome b-c1 complex) that is part of the mitochondrial respiratory chain. The b-c1 complex mediates electron transfer from ubiquinol to cytochrome c. Contributes to the generation of a proton gradient across the mitochondrial membrane that is then used for ATP synthesis. The protein is Cytochrome b (mt-cyb) of Carcharodon carcharias (Great white shark).